The primary structure comprises 484 residues: UBX domain-containing protein 11 (484 aa).

The segment at 1–28 (MSSPLASLSKTRKVPLESESVNPGRRGI) is disordered. Positions 69–147 (HDSELMASMT…IGEMERFLSD (79 aa)) form a coiled coil. The region spanning 227–291 (LEPIPLKVYR…VSDLRNQIYP (65 aa)) is the SEP domain. The UBX domain maps to 389–466 (PMPLLSMLRI…GLVPNATLLL (78 aa)). Ser-478 and Ser-482 each carry phosphoserine.

As to quaternary structure, interacts with GNA12, GNA13, RND1, RND2 and RND3.

The protein localises to the cytoplasm. It localises to the cytoskeleton. May be involved in the reorganization of actin cytoskeleton mediated by RND1, RND2 and RND3. Promotes RHOA activation mediated by GNA12 and GNA13. This Mus musculus (Mouse) protein is UBX domain-containing protein 11 (Ubxn11).